A 528-amino-acid polypeptide reads, in one-letter code: Vacuolar fusion protein MON1 homolog (528 aa).

Positions 1–16 are enriched in polar residues; the sequence is MEVEQTSVRSDTNSTC. The tract at residues 1-50 is disordered; it reads MEVEQTSVRSDTNSTCEYLDAEGDPESPNLYQEADPDQEAEQQNHSIISE.

The protein belongs to the MON1/SAND family. Component of the Mon1-Ccz1 guanyl-nucleotide exchange factor complex made up of Mon1, Ccz1 and Bulli; the interaction of Bulli with the Mon1-Ccz1 heterodimer is mediated via the C-terminal Mic1 domain of Bulli. Mon1 and Ccz1 form a stable complex which displays Rab7 GEF activity with or without Bulli; GEF activity is enhanced by Bulli possibly by improving membrane association of the complex. Interacts with Rab5 and Rab7; preferentially binds GTP-bound Rab5 and GDP-bound Rab7.

The protein resides in the cytoplasm. The protein localises to the cytosol. Its activity is regulated as follows. The Rab7 guanyl-nucleotide exchange factor (GEF) activity of the Mon1-Ccz1 complex is autoinhibited by the N-terminal disordered region of Mon1. GEF activity is stimulated by Rab5-mediated recruitment to membranes. Part of the Mon1-Ccz1 guanyl-nucleotide exchange factor complex specific for Rab7 that promotes the exchange of GDP to GTP, converting Rab7 from an inactive GDP-bound form into an active GTP-bound form. Plays an important role in membrane trafficking through the secretory apparatus. Required for recruitment of Rab7 to endosomal and autophagosomal membranes to mediate endolysosomal and autolysosomal vesicle maturation. Required for fusion of multivesicular bodies and lysosomes but not their formation or trafficking. Involved in the replacement of Rab5 (and possibly Rab4) with Rab7, also known as Rab conversion or the Rab cascade, during endosomal maturation. The Mon1-Ccz1 complex is recruited to phosphatidylinositol 3-phosphate (PtdIns[3]P) enriched membranes by Rab5, which stimulates recruitment and guanyl-nucleotide exchange of Rab7. Together with Rab7 required for autolysosome formation in fat cells and autophagic degradation during starvation-induced basal and developmental autophagy. Involved in neuromuscular junction (NMJ) presynaptic bouton function and morphogenesis. Together with Rab7, regulates levels of postsynaptic glutamate receptor GluRIIA in the NMJ presynapse. This Drosophila melanogaster (Fruit fly) protein is Vacuolar fusion protein MON1 homolog.